The chain runs to 117 residues: Protein Turandot F (117 aa).

Positions 1 to 22 (MKTVILFSFLLVLLGYLGAGHA) are cleaved as a signal peptide.

Belongs to the Turandot family.

The protein resides in the secreted. Functionally, a humoral factor that may play a role in stress tolerance. This is Protein Turandot F from Drosophila sechellia (Fruit fly).